Reading from the N-terminus, the 297-residue chain is Homoserine kinase (297 aa).

Position 82–92 (82–92) interacts with ATP; the sequence is PVSRGLGSSAA.

This sequence belongs to the GHMP kinase family. Homoserine kinase subfamily.

It is found in the cytoplasm. The enzyme catalyses L-homoserine + ATP = O-phospho-L-homoserine + ADP + H(+). It functions in the pathway amino-acid biosynthesis; L-threonine biosynthesis; L-threonine from L-aspartate: step 4/5. Functionally, catalyzes the ATP-dependent phosphorylation of L-homoserine to L-homoserine phosphate. The protein is Homoserine kinase of Clostridium botulinum (strain Loch Maree / Type A3).